The primary structure comprises 192 residues: Probable metallophosphoesterase MJ0623 (192 aa).

Positions 41, 43, 70, 92, 115, 144, and 146 each coordinate a divalent metal cation.

Belongs to the metallophosphoesterase superfamily. YfcE family. A divalent metal cation is required as a cofactor.

The protein is Probable metallophosphoesterase MJ0623 of Methanocaldococcus jannaschii (strain ATCC 43067 / DSM 2661 / JAL-1 / JCM 10045 / NBRC 100440) (Methanococcus jannaschii).